Reading from the N-terminus, the 560-residue chain is MASRRLLASLLRQSAQRGGGLISRSLGNSIPKSASRASSRASPKGFLLNRAVQYATSAAAPASQPSTPPKSGSEPSGKITDEFTGAGSIGKVCQVIGAVVDVRFDEGLPPILTALEVLDNQIRLVLEVAQHLGENMVRTIAMDGTEGLVRGQRVLNTGSPITVPVGRATLGRIINVIGEAIDERGPITTDHFLPIHREAPAFVEQATEQQILVTGIKVVDLLAPYQRGGKIGLFGGAGVGKTVLIMELINNVAKAHGGFSVFAGVGERTREGNDLYREMIESGVIKLGEKQSESKCALVYGQMNEPPGARARVGLTGLTVAEHFRDAEGQDVLLFIDNIFRFTQANSEVSALLGRIPSAVGYQPTLATDLGGLQERITTTKKGSITSVQAIYVPADDLTDPAPATTFAHLDATTVLSRQISELGIYPAVDPLDSTSRMLSPHILGEDHYNTARGVQKVLQNYKNLQDIIAILGMDELSEDDKMTVARARKIQRFLSQPFHVAEVFTGAPGKYVDLKESINSFQGVLDGKYDDLSEQSFYMVGGIDEVIAKAEKIAKESAA.

The N-terminal 54 residues, Met1–Tyr54, are a transit peptide targeting the mitochondrion. 2 disordered regions span residues Gly20–Lys44 and Ala58–Asp81. Composition is skewed to low complexity over residues Ser33 to Ser42 and Ala58 to Ser71. Gly235–Thr242 provides a ligand contact to ATP.

The protein belongs to the ATPase alpha/beta chains family. In terms of assembly, F-type ATPases have 2 components, CF(1) - the catalytic core - and CF(0) - the membrane proton channel. CF(1) has five subunits: alpha(3), beta(3), gamma(1), delta(1), epsilon(1). CF(0) has three main subunits: a, b and c.

It localises to the mitochondrion. It is found in the mitochondrion inner membrane. It carries out the reaction ATP + H2O + 4 H(+)(in) = ADP + phosphate + 5 H(+)(out). Mitochondrial membrane ATP synthase (F(1)F(0) ATP synthase or Complex V) produces ATP from ADP in the presence of a proton gradient across the membrane which is generated by electron transport complexes of the respiratory chain. F-type ATPases consist of two structural domains, F(1) - containing the extramembraneous catalytic core, and F(0) - containing the membrane proton channel, linked together by a central stalk and a peripheral stalk. During catalysis, ATP synthesis in the catalytic domain of F(1) is coupled via a rotary mechanism of the central stalk subunits to proton translocation. Subunits alpha and beta form the catalytic core in F(1). Rotation of the central stalk against the surrounding alpha(3)beta(3) subunits leads to hydrolysis of ATP in three separate catalytic sites on the beta subunits. The protein is ATP synthase subunit beta, mitochondrial (ATPB) of Nicotiana plumbaginifolia (Leadwort-leaved tobacco).